A 218-amino-acid polypeptide reads, in one-letter code: uncharacterized protein (218 aa).

A signal peptide spans 1 to 21 (MKKFVYKYSFGALLLLSGLSS). Cys22 carries the N-palmitoyl cysteine lipid modification. A lipid anchor (S-diacylglycerol cysteine) is attached at Cys22.

It belongs to the chlamydial CPn_0875/CT_734/TC_0107 family.

Its subcellular location is the cell membrane. This is an uncharacterized protein from Chlamydia muridarum (strain MoPn / Nigg).